The sequence spans 312 residues: Acetaldehyde dehydrogenase (312 aa).

12–15 contributes to the NAD(+) binding site; it reads SGNV. Cys-132 functions as the Acyl-thioester intermediate in the catalytic mechanism. Residues 163–171 and Asn-290 contribute to the NAD(+) site; that span reads SAGPGTRAN.

It belongs to the acetaldehyde dehydrogenase family.

It catalyses the reaction acetaldehyde + NAD(+) + CoA = acetyl-CoA + NADH + H(+). The sequence is that of Acetaldehyde dehydrogenase (cbzQ) from Pseudomonas putida (Arthrobacter siderocapsulatus).